The primary structure comprises 486 residues: Bifunctional protein GlmU (486 aa).

The pyrophosphorylase stretch occupies residues 1 to 241 (MSASDSSSAV…ARELAGVNDR (241 aa)). UDP-N-acetyl-alpha-D-glucosamine-binding positions include 13-16 (LAAG), K27, Q84, and 89-90 (GT). D114 contributes to the Mg(2+) binding site. The UDP-N-acetyl-alpha-D-glucosamine site is built by G151, E166, N181, and N239. N239 contacts Mg(2+). Residues 242–262 (VQLAEAGAELNRRTVEAAMRG) are linker. Residues 263–486 (GATIVDPATT…AQNSVPNQEG (224 aa)) form an N-acetyltransferase region. R344 and K362 together coordinate UDP-N-acetyl-alpha-D-glucosamine. The active-site Proton acceptor is H374. Residues Y377 and N388 each contribute to the UDP-N-acetyl-alpha-D-glucosamine site. Residues A391, 397 to 398 (NY), S416, and A434 contribute to the acetyl-CoA site. Positions 464–486 (KRPGTAAADAAAAAQNSVPNQEG) are disordered.

It in the N-terminal section; belongs to the N-acetylglucosamine-1-phosphate uridyltransferase family. In the C-terminal section; belongs to the transferase hexapeptide repeat family. As to quaternary structure, homotrimer. It depends on Mg(2+) as a cofactor.

It is found in the cytoplasm. The enzyme catalyses alpha-D-glucosamine 1-phosphate + acetyl-CoA = N-acetyl-alpha-D-glucosamine 1-phosphate + CoA + H(+). It catalyses the reaction N-acetyl-alpha-D-glucosamine 1-phosphate + UTP + H(+) = UDP-N-acetyl-alpha-D-glucosamine + diphosphate. The protein operates within nucleotide-sugar biosynthesis; UDP-N-acetyl-alpha-D-glucosamine biosynthesis; N-acetyl-alpha-D-glucosamine 1-phosphate from alpha-D-glucosamine 6-phosphate (route II): step 2/2. It participates in nucleotide-sugar biosynthesis; UDP-N-acetyl-alpha-D-glucosamine biosynthesis; UDP-N-acetyl-alpha-D-glucosamine from N-acetyl-alpha-D-glucosamine 1-phosphate: step 1/1. Its pathway is bacterial outer membrane biogenesis; LPS lipid A biosynthesis. In terms of biological role, catalyzes the last two sequential reactions in the de novo biosynthetic pathway for UDP-N-acetylglucosamine (UDP-GlcNAc). The C-terminal domain catalyzes the transfer of acetyl group from acetyl coenzyme A to glucosamine-1-phosphate (GlcN-1-P) to produce N-acetylglucosamine-1-phosphate (GlcNAc-1-P), which is converted into UDP-GlcNAc by the transfer of uridine 5-monophosphate (from uridine 5-triphosphate), a reaction catalyzed by the N-terminal domain. This chain is Bifunctional protein GlmU, found in Corynebacterium efficiens (strain DSM 44549 / YS-314 / AJ 12310 / JCM 11189 / NBRC 100395).